Reading from the N-terminus, the 223-residue chain is Endonuclease V (223 aa).

The Mg(2+) site is built by Asp35 and Asp103.

Belongs to the endonuclease V family. Mg(2+) serves as cofactor.

The protein localises to the cytoplasm. It carries out the reaction Endonucleolytic cleavage at apurinic or apyrimidinic sites to products with a 5'-phosphate.. In terms of biological role, DNA repair enzyme involved in the repair of deaminated bases. Selectively cleaves double-stranded DNA at the second phosphodiester bond 3' to a deoxyinosine leaving behind the intact lesion on the nicked DNA. In Salmonella agona (strain SL483), this protein is Endonuclease V.